We begin with the raw amino-acid sequence, 217 residues long: Glutathione S-transferase (217 aa).

One can recognise a GST N-terminal domain in the interval 2 to 82; that stretch reads TIKVHGNPRS…YLAYTHDHQN (81 aa). Glutathione contacts are provided by residues Ser-11, 40–41, 53–54, and 66–67; these read HK, QV, and ES. The 127-residue stretch at 91–217 folds into the GST C-terminal domain; that stretch reads EKHEMAAQLV…EKTLALQKQA (127 aa).

It belongs to the GST superfamily. Phi family.

It is found in the cytoplasm. It carries out the reaction RX + glutathione = an S-substituted glutathione + a halide anion + H(+). In terms of biological role, conjugation of reduced glutathione to a wide number of exogenous and endogenous hydrophobic electrophiles. In Silene vulgaris (Bladder campion), this protein is Glutathione S-transferase (GST).